The chain runs to 154 residues: Endoribonuclease YbeY (154 aa).

3 residues coordinate Zn(2+): histidine 113, histidine 117, and histidine 123.

Belongs to the endoribonuclease YbeY family. The cofactor is Zn(2+).

It localises to the cytoplasm. Functionally, single strand-specific metallo-endoribonuclease involved in late-stage 70S ribosome quality control and in maturation of the 3' terminus of the 16S rRNA. In Vibrio campbellii (strain ATCC BAA-1116), this protein is Endoribonuclease YbeY.